We begin with the raw amino-acid sequence, 1342 residues long: DNA-directed RNA polymerase subunit beta (1342 aa).

This sequence belongs to the RNA polymerase beta chain family. The RNAP catalytic core consists of 2 alpha, 1 beta, 1 beta' and 1 omega subunit. When a sigma factor is associated with the core the holoenzyme is formed, which can initiate transcription.

The enzyme catalyses RNA(n) + a ribonucleoside 5'-triphosphate = RNA(n+1) + diphosphate. Functionally, DNA-dependent RNA polymerase catalyzes the transcription of DNA into RNA using the four ribonucleoside triphosphates as substrates. This chain is DNA-directed RNA polymerase subunit beta, found in Serratia proteamaculans (strain 568).